The primary structure comprises 125 residues: Small ribosomal subunit protein uS13 (125 aa).

The segment at 90 to 125 (QRHRKGLPVRGQRTKTNARTRKGPKRTVAGKKKATK) is disordered.

Belongs to the universal ribosomal protein uS13 family. As to quaternary structure, part of the 30S ribosomal subunit. Forms a loose heterodimer with protein S19. Forms two bridges to the 50S subunit in the 70S ribosome.

In terms of biological role, located at the top of the head of the 30S subunit, it contacts several helices of the 16S rRNA. In the 70S ribosome it contacts the 23S rRNA (bridge B1a) and protein L5 of the 50S subunit (bridge B1b), connecting the 2 subunits; these bridges are implicated in subunit movement. Contacts the tRNAs in the A and P-sites. This chain is Small ribosomal subunit protein uS13, found in Bifidobacterium longum (strain DJO10A).